The following is a 119-amino-acid chain: Large ribosomal subunit protein bL20 (119 aa).

The protein belongs to the bacterial ribosomal protein bL20 family.

In terms of biological role, binds directly to 23S ribosomal RNA and is necessary for the in vitro assembly process of the 50S ribosomal subunit. It is not involved in the protein synthesizing functions of that subunit. In Clostridium botulinum (strain ATCC 19397 / Type A), this protein is Large ribosomal subunit protein bL20.